A 138-amino-acid chain; its full sequence is Large ribosomal subunit protein bL19 (138 aa).

The protein belongs to the bacterial ribosomal protein bL19 family.

Functionally, this protein is located at the 30S-50S ribosomal subunit interface and may play a role in the structure and function of the aminoacyl-tRNA binding site. The sequence is that of Large ribosomal subunit protein bL19 from Rickettsia felis (strain ATCC VR-1525 / URRWXCal2) (Rickettsia azadi).